The chain runs to 293 residues: Sodium-type flagellar protein MotY (293 aa).

The N-terminal stretch at 1–21 is a signal peptide; the sequence is MNKWLITSGVMLSLLSANSYA. Residues 175-292 enclose the OmpA-like domain; that stretch reads YSFEDIAFTI…RVVISLGRTQ (118 aa).

The protein localises to the cell membrane. Its function is as follows. May play the role of a stator in the sodium flagellar motor, stabilizing the force-generating unit through direct interaction with the cell wall. This is Sodium-type flagellar protein MotY from Vibrio parahaemolyticus serotype O3:K6 (strain RIMD 2210633).